Reading from the N-terminus, the 39-residue chain is SPbeta prophage-derived membrane protein YosA (39 aa).

Residues 19 to 39 (SFVLIVVLFILLIIVGATFLY) form a helical membrane-spanning segment.

It belongs to the SscA family.

The protein resides in the membrane. This chain is SPbeta prophage-derived membrane protein YosA (yosA), found in Bacillus subtilis (strain 168).